We begin with the raw amino-acid sequence, 258 residues long: Global transcriptional regulator CodY (258 aa).

A GAF domain region spans residues 1–156 (MSILLNKTRK…SATIVGLEIL (156 aa)). Residues 204–223 (ASKIADKVGITRSVIVNALR) constitute a DNA-binding region (H-T-H motif).

Belongs to the CodY family.

The protein resides in the cytoplasm. DNA-binding global transcriptional regulator which is involved in the adaptive response to starvation and acts by directly or indirectly controlling the expression of numerous genes in response to nutrient availability. During rapid exponential growth, CodY is highly active and represses genes whose products allow adaptation to nutrient depletion. In Clostridium acetobutylicum (strain ATCC 824 / DSM 792 / JCM 1419 / IAM 19013 / LMG 5710 / NBRC 13948 / NRRL B-527 / VKM B-1787 / 2291 / W), this protein is Global transcriptional regulator CodY.